The following is a 187-amino-acid chain: Threonylcarbamoyl-AMP synthase (187 aa).

Residues 3 to 187 (QVLPADAAEL…ARSGTVIREG (185 aa)) enclose the YrdC-like domain.

Belongs to the SUA5 family. TsaC subfamily.

It localises to the cytoplasm. The enzyme catalyses L-threonine + hydrogencarbonate + ATP = L-threonylcarbamoyladenylate + diphosphate + H2O. In terms of biological role, required for the formation of a threonylcarbamoyl group on adenosine at position 37 (t(6)A37) in tRNAs that read codons beginning with adenine. Catalyzes the conversion of L-threonine, HCO(3)(-)/CO(2) and ATP to give threonylcarbamoyl-AMP (TC-AMP) as the acyladenylate intermediate, with the release of diphosphate. The chain is Threonylcarbamoyl-AMP synthase from Shewanella pealeana (strain ATCC 700345 / ANG-SQ1).